The chain runs to 180 residues: UPF0227 protein KPN78578_10770 (180 aa).

Belongs to the UPF0227 family.

This chain is UPF0227 protein KPN78578_10770, found in Klebsiella pneumoniae subsp. pneumoniae (strain ATCC 700721 / MGH 78578).